A 108-amino-acid chain; its full sequence is Nucleoid-associated protein PSPTO_3645 (108 aa).

A compositionally biased stretch (polar residues) spans 85–96 (QASQDKTASMTA). The interval 85–108 (QASQDKTASMTAGMQLPPGMKLPF) is disordered.

This sequence belongs to the YbaB/EbfC family. In terms of assembly, homodimer.

It is found in the cytoplasm. The protein resides in the nucleoid. Its function is as follows. Binds to DNA and alters its conformation. May be involved in regulation of gene expression, nucleoid organization and DNA protection. The polypeptide is Nucleoid-associated protein PSPTO_3645 (Pseudomonas syringae pv. tomato (strain ATCC BAA-871 / DC3000)).